Here is a 275-residue protein sequence, read N- to C-terminus: Membrane protein insertase MisCB (275 aa).

Positions 1–18 (MLKTYQKLLAMGIFLIVL) are cleaved as a signal peptide. Residue Cys-19 is the site of N-palmitoyl cysteine attachment. A lipid anchor (S-diacylglycerol cysteine) is attached at Cys-19. 5 consecutive transmembrane segments (helical) span residues 63–83 (YGLS…PLFV), 139–159 (AMGC…YYAI), 172–192 (WFSL…MYFV), 219–239 (LMVF…PAAL), and 240–260 (PLYW…LQMT).

It belongs to the OXA1/ALB3/YidC family. Type 2 subfamily. As to quaternary structure, mostly monomeric, it may also form dimers. Interacts with SpoIIIAE. Forms a complex with the F(1)F(0) ATP synthase in which can be found the alpha, beta, gamma, delta and epsilon subunits of F(1) and a, b and subunits of F(0). YqgA is found in the same complex.

Its subcellular location is the cell membrane. Functionally, required for the insertion and/or proper folding and/or complex formation of integral membrane proteins into the membrane. Involved in integration of membrane proteins that insert both dependently and independently of the Sec translocase complex, as well as at least some lipoproteins. Also involved in protein secretion processes. It has an overlapping, although partly distinct, function compared to SpoIIIJ(MisCB). The polypeptide is Membrane protein insertase MisCB (misCB) (Bacillus subtilis (strain 168)).